We begin with the raw amino-acid sequence, 422 residues long: Enolase (422 aa).

Residue glutamine 161 coordinates (2R)-2-phosphoglycerate. Glutamate 203 functions as the Proton donor in the catalytic mechanism. Mg(2+) is bound by residues aspartate 240, glutamate 283, and aspartate 310. Residues lysine 335, arginine 364, serine 365, and lysine 386 each contribute to the (2R)-2-phosphoglycerate site. The active-site Proton acceptor is the lysine 335.

This sequence belongs to the enolase family. Mg(2+) is required as a cofactor.

It localises to the cytoplasm. The protein resides in the secreted. The protein localises to the cell surface. It catalyses the reaction (2R)-2-phosphoglycerate = phosphoenolpyruvate + H2O. Its pathway is carbohydrate degradation; glycolysis; pyruvate from D-glyceraldehyde 3-phosphate: step 4/5. In terms of biological role, catalyzes the reversible conversion of 2-phosphoglycerate (2-PG) into phosphoenolpyruvate (PEP). It is essential for the degradation of carbohydrates via glycolysis. The chain is Enolase from Deinococcus geothermalis (strain DSM 11300 / CIP 105573 / AG-3a).